Here is a 194-residue protein sequence, read N- to C-terminus: Imidazoleglycerol-phosphate dehydratase (194 aa).

It belongs to the imidazoleglycerol-phosphate dehydratase family.

The protein resides in the cytoplasm. The enzyme catalyses D-erythro-1-(imidazol-4-yl)glycerol 3-phosphate = 3-(imidazol-4-yl)-2-oxopropyl phosphate + H2O. Its pathway is amino-acid biosynthesis; L-histidine biosynthesis; L-histidine from 5-phospho-alpha-D-ribose 1-diphosphate: step 6/9. The chain is Imidazoleglycerol-phosphate dehydratase from Bacillus thuringiensis (strain Al Hakam).